The chain runs to 36 residues: Beta/delta/mu-theraphotoxin-Pv1 (36 aa).

3 disulfides stabilise this stretch: Cys3-Cys17, Cys10-Cys22, and Cys16-Cys30. The residue at position 36 (Phe36) is a Phenylalanine amide.

This sequence belongs to the neurotoxin 10 (Hwtx-1) family. In terms of tissue distribution, expressed by the venom gland.

It localises to the secreted. In terms of biological role, gating-modifier toxin that targets voltage-gated sodium channels. Inhibits the inactivation of Nav1.7/SCN9A. This Poecilotheria vittata (Ghost ornamental tarantula) protein is Beta/delta/mu-theraphotoxin-Pv1.